Here is a 213-residue protein sequence, read N- to C-terminus: ATP-dependent Clp protease proteolytic subunit (213 aa).

Residue serine 114 is the Nucleophile of the active site. Residue histidine 139 is part of the active site.

This sequence belongs to the peptidase S14 family. As to quaternary structure, fourteen ClpP subunits assemble into 2 heptameric rings which stack back to back to give a disk-like structure with a central cavity, resembling the structure of eukaryotic proteasomes.

Its subcellular location is the cytoplasm. The enzyme catalyses Hydrolysis of proteins to small peptides in the presence of ATP and magnesium. alpha-casein is the usual test substrate. In the absence of ATP, only oligopeptides shorter than five residues are hydrolyzed (such as succinyl-Leu-Tyr-|-NHMec, and Leu-Tyr-Leu-|-Tyr-Trp, in which cleavage of the -Tyr-|-Leu- and -Tyr-|-Trp bonds also occurs).. Its function is as follows. Cleaves peptides in various proteins in a process that requires ATP hydrolysis. Has a chymotrypsin-like activity. Plays a major role in the degradation of misfolded proteins. In Ectopseudomonas mendocina (strain ymp) (Pseudomonas mendocina), this protein is ATP-dependent Clp protease proteolytic subunit.